The chain runs to 135 residues: Small ribosomal subunit protein uS17 (135 aa).

Residues 1–59 (MAEAKTGAKAAPRVAKAAKAAPKKAAPNDAEAIGAANAANVKGPKHTPRTPKPRGRRKT) are disordered. Residues 8–42 (AKAAPRVAKAAKAAPKKAAPNDAEAIGAANAANVK) show a composition bias toward low complexity. Over residues 43 to 59 (GPKHTPRTPKPRGRRKT) the composition is skewed to basic residues.

This sequence belongs to the universal ribosomal protein uS17 family. In terms of assembly, part of the 30S ribosomal subunit.

Functionally, one of the primary rRNA binding proteins, it binds specifically to the 5'-end of 16S ribosomal RNA. This chain is Small ribosomal subunit protein uS17, found in Mycobacterium bovis (strain ATCC BAA-935 / AF2122/97).